A 199-amino-acid polypeptide reads, in one-letter code: 7-methyl-GTP pyrophosphatase (199 aa).

The active-site Proton acceptor is the D72.

This sequence belongs to the Maf family. YceF subfamily. It depends on a divalent metal cation as a cofactor.

The protein localises to the cytoplasm. The enzyme catalyses N(7)-methyl-GTP + H2O = N(7)-methyl-GMP + diphosphate + H(+). Functionally, nucleoside triphosphate pyrophosphatase that hydrolyzes 7-methyl-GTP (m(7)GTP). May have a dual role in cell division arrest and in preventing the incorporation of modified nucleotides into cellular nucleic acids. The polypeptide is 7-methyl-GTP pyrophosphatase (Alkalilimnicola ehrlichii (strain ATCC BAA-1101 / DSM 17681 / MLHE-1)).